Consider the following 306-residue polypeptide: Glutaminase (306 aa).

Substrate is bound by residues Ser-64, Asn-115, Glu-159, Asn-166, Tyr-190, Tyr-242, and Val-260.

Belongs to the glutaminase family. Homotetramer.

It carries out the reaction L-glutamine + H2O = L-glutamate + NH4(+). The sequence is that of Glutaminase from Vibrio parahaemolyticus serotype O3:K6 (strain RIMD 2210633).